We begin with the raw amino-acid sequence, 89 residues long: Small ribosomal subunit protein uS15 (89 aa).

The protein belongs to the universal ribosomal protein uS15 family. Part of the 30S ribosomal subunit. Forms a bridge to the 50S subunit in the 70S ribosome, contacting the 23S rRNA.

One of the primary rRNA binding proteins, it binds directly to 16S rRNA where it helps nucleate assembly of the platform of the 30S subunit by binding and bridging several RNA helices of the 16S rRNA. Its function is as follows. Forms an intersubunit bridge (bridge B4) with the 23S rRNA of the 50S subunit in the ribosome. The polypeptide is Small ribosomal subunit protein uS15 (Haemophilus influenzae (strain PittGG)).